The sequence spans 1359 residues: Tripeptidyl-peptidase 2 (1359 aa).

The interval Ala45–Ala81 is disordered. Over residues Ala64–Ala81 the composition is skewed to low complexity. The Peptidase S8 domain occupies Glu102–Phe600. Active-site charge relay system residues include Asp126, His353, and Ser539.

Belongs to the peptidase S8 family.

The catalysed reaction is Release of an N-terminal tripeptide from a polypeptide.. Functionally, serine protease that may function in the proteasome pathway. The sequence is that of Tripeptidyl-peptidase 2 (TPP2) from Oryza sativa subsp. japonica (Rice).